A 222-amino-acid polypeptide reads, in one-letter code: Large ribosomal subunit protein uL1 (222 aa).

It belongs to the universal ribosomal protein uL1 family. As to quaternary structure, part of the 50S ribosomal subunit.

Functionally, binds directly to 23S rRNA. Probably involved in E site tRNA release. Its function is as follows. Protein L1 is also a translational repressor protein, it controls the translation of its operon by binding to its mRNA. The sequence is that of Large ribosomal subunit protein uL1 from Pyrobaculum neutrophilum (strain DSM 2338 / JCM 9278 / NBRC 100436 / V24Sta) (Thermoproteus neutrophilus).